The primary structure comprises 1193 residues: Sperm-associated antigen 5 (1193 aa).

The segment at Met1–Ser48 is disordered. Phosphoserine is present on residues Ser12, Ser14, Ser43, Ser62, and Ser66. The span at Ala35–Ser48 shows a compositional bias: polar residues. Residues Glu96 to Glu117 form a disordered region. At Thr111 the chain carries Phosphothreonine; by GSK3-beta. Phosphoserine occurs at positions 135, 159, and 334. Phosphothreonine is present on Thr336. Residues Ser341, Ser353, and Ser362 each carry the phosphoserine modification. The span at Pro390 to Leu405 shows a compositional bias: polar residues. Residues Pro390–Glu416 form a disordered region. The segment at Asn482–Ala850 is interaction with KNSTRN. 2 coiled-coil regions span residues Cys545–Glu608 and Gln759–Arg868. Position 937 is a phosphothreonine; by GSK3-beta (Thr937). Phosphoserine; by GSK3-beta is present on Ser974. The residue at position 978 (Thr978) is a Phosphothreonine; by GSK3-beta. Residues Glu979–Ser1174 are a coiled coil.

As to quaternary structure, homodimer, with a globular head domain and a long stalk. Homooligomer; the globular head domains associate, resulting in aster-like structures. Binds to microtubules in the mitotic spindle. Interacts with DCLRE1B/Apollo. Part of an astrin (SPAG5)-kinastrin (SKAP) complex containing KNSTRN, SPAG5, PLK1, DYNLL1 and SGO2. Interacts with KNSTRN. Interacts with RPTOR; this interaction competes with RPTOR binding to MTOR, resulting in decreased mTORC1 formation. Interacts with G3BP1. The complex formed with G3BP1 AND RPTOR is increased by oxidative stress. Interacts with OSBPL8, PCM1 and CDK5RAP2. Interacts (via C-terminus) with NUMA1 (via C-terminus); this interaction promotes the recruitment of SPAG5 to the microtubules at spindle poles in a dynein-dynactin-dependent manner. Interacts with DYNLL1. In terms of processing, phosphorylated by AURKA. In terms of tissue distribution, highly expressed in testis. Detected at low levels in placenta, liver, pancreas, thymus and colon.

The protein resides in the cytoplasm. It is found in the cytoskeleton. The protein localises to the spindle. It localises to the spindle pole. Its subcellular location is the chromosome. The protein resides in the centromere. It is found in the kinetochore. The protein localises to the midbody. It localises to the microtubule organizing center. Its subcellular location is the centrosome. The protein resides in the cytoplasmic granule. It is found in the centriolar satellite. Functionally, essential component of the mitotic spindle required for normal chromosome segregation and progression into anaphase. Required for chromosome alignment, normal timing of sister chromatid segregation, and maintenance of spindle pole architecture. In complex with SKAP, promotes stable microtubule-kinetochore attachments. May contribute to the regulation of separase activity. May regulate AURKA localization to mitotic spindle, but not to centrosomes and CCNB1 localization to both mitotic spindle and centrosomes. Involved in centriole duplication. Required for CDK5RAP2, CEP152, WDR62 and CEP63 centrosomal localization and promotes the centrosomal localization of CDK2. In non-mitotic cells, upon stress induction, inhibits mammalian target of rapamycin complex 1 (mTORC1) association and recruits the mTORC1 component RPTOR to stress granules (SGs), thereby preventing mTORC1 hyperactivation-induced apoptosis. May enhance GSK3B-mediated phosphorylation of other substrates, such as MAPT/TAU. The protein is Sperm-associated antigen 5 (SPAG5) of Homo sapiens (Human).